We begin with the raw amino-acid sequence, 159 residues long: SsrA-binding protein (159 aa).

The protein belongs to the SmpB family.

It localises to the cytoplasm. Functionally, required for rescue of stalled ribosomes mediated by trans-translation. Binds to transfer-messenger RNA (tmRNA), required for stable association of tmRNA with ribosomes. tmRNA and SmpB together mimic tRNA shape, replacing the anticodon stem-loop with SmpB. tmRNA is encoded by the ssrA gene; the 2 termini fold to resemble tRNA(Ala) and it encodes a 'tag peptide', a short internal open reading frame. During trans-translation Ala-aminoacylated tmRNA acts like a tRNA, entering the A-site of stalled ribosomes, displacing the stalled mRNA. The ribosome then switches to translate the ORF on the tmRNA; the nascent peptide is terminated with the 'tag peptide' encoded by the tmRNA and targeted for degradation. The ribosome is freed to recommence translation, which seems to be the essential function of trans-translation. The protein is SsrA-binding protein of Bifidobacterium adolescentis (strain ATCC 15703 / DSM 20083 / NCTC 11814 / E194a).